The sequence spans 188 residues: GMP synthase [glutamine-hydrolyzing] subunit A (188 aa).

A Glutamine amidotransferase type-1 domain is found at 3-188 (PLYVVNNYGQ…FSICTGQNKG (186 aa)). The Nucleophile role is filled by Cys75. Residues His162 and Glu164 contribute to the active site.

As to quaternary structure, heterodimer composed of a glutamine amidotransferase subunit (A) and a GMP-binding subunit (B).

It catalyses the reaction XMP + L-glutamine + ATP + H2O = GMP + L-glutamate + AMP + diphosphate + 2 H(+). It functions in the pathway purine metabolism; GMP biosynthesis; GMP from XMP (L-Gln route): step 1/1. Its function is as follows. Catalyzes the synthesis of GMP from XMP. This is GMP synthase [glutamine-hydrolyzing] subunit A from Methanospirillum hungatei JF-1 (strain ATCC 27890 / DSM 864 / NBRC 100397 / JF-1).